The following is a 227-amino-acid chain: MQTFTAVVPAAGRGSRMQANKPKQYLHLGDKTIIEHTLTRLLAHPQIEKIVVVIADDDHYFSSLPLANHPRIEVTLGGPERAISVLNGLSSVETDWVLVHDAARPCITQSDLDALMAAAELGEDGAILAVPVKDTMKRSDSQQRIEETVERGHLWHALTPQMFPTQQLADAIDAGLTQSIVLTDEASAMERAGFKPLLVAGRSDNIKVTRPEDLALAAFILQQQELE.

Belongs to the IspD/TarI cytidylyltransferase family. IspD subfamily.

The enzyme catalyses 2-C-methyl-D-erythritol 4-phosphate + CTP + H(+) = 4-CDP-2-C-methyl-D-erythritol + diphosphate. Its pathway is isoprenoid biosynthesis; isopentenyl diphosphate biosynthesis via DXP pathway; isopentenyl diphosphate from 1-deoxy-D-xylulose 5-phosphate: step 2/6. Functionally, catalyzes the formation of 4-diphosphocytidyl-2-C-methyl-D-erythritol from CTP and 2-C-methyl-D-erythritol 4-phosphate (MEP). This is 2-C-methyl-D-erythritol 4-phosphate cytidylyltransferase from Tolumonas auensis (strain DSM 9187 / NBRC 110442 / TA 4).